The chain runs to 344 residues: Lipase chaperone (344 aa).

Residues 14 to 34 traverse the membrane as a helical segment; the sequence is AAIYGVVGLAAIAGVAMWSGA.

The protein belongs to the lipase chaperone family.

It is found in the cell inner membrane. May be involved in the folding of the extracellular lipase during its passage through the periplasm. The polypeptide is Lipase chaperone (Burkholderia cenocepacia (strain HI2424)).